Here is an 83-residue protein sequence, read N- to C-terminus: RNA-binding protein Hfq (83 aa).

The 60-residue stretch at 9–68 (DPFLNALRKERIPVSIYLVNGIKLQGQVESFDQFVILLKNTVSQMVYKHAISTVVPSRAL) folds into the Sm domain.

This sequence belongs to the Hfq family. As to quaternary structure, homohexamer.

Its function is as follows. RNA chaperone that binds small regulatory RNA (sRNAs) and mRNAs to facilitate mRNA translational regulation in response to envelope stress, environmental stress and changes in metabolite concentrations. Also binds with high specificity to tRNAs. The sequence is that of RNA-binding protein Hfq from Pseudoalteromonas atlantica (strain T6c / ATCC BAA-1087).